A 456-amino-acid polypeptide reads, in one-letter code: Argininosuccinate lyase (456 aa).

It belongs to the lyase 1 family. Argininosuccinate lyase subfamily.

Its subcellular location is the cytoplasm. It catalyses the reaction 2-(N(omega)-L-arginino)succinate = fumarate + L-arginine. It participates in amino-acid biosynthesis; L-arginine biosynthesis; L-arginine from L-ornithine and carbamoyl phosphate: step 3/3. This is Argininosuccinate lyase from Shewanella amazonensis (strain ATCC BAA-1098 / SB2B).